Reading from the N-terminus, the 28-residue chain is Dermaseptin-6TR (28 aa).

Expressed by the skin glands.

It localises to the secreted. In terms of biological role, has antimicrobial activity. This Phyllomedusa trinitatis (Trinidad leaf frog) protein is Dermaseptin-6TR.